A 146-amino-acid chain; its full sequence is Large ribosomal subunit protein uL13 (146 aa).

This sequence belongs to the universal ribosomal protein uL13 family. In terms of assembly, part of the 50S ribosomal subunit.

In terms of biological role, this protein is one of the early assembly proteins of the 50S ribosomal subunit, although it is not seen to bind rRNA by itself. It is important during the early stages of 50S assembly. This Bdellovibrio bacteriovorus (strain ATCC 15356 / DSM 50701 / NCIMB 9529 / HD100) protein is Large ribosomal subunit protein uL13.